A 473-amino-acid chain; its full sequence is Lactococcin A secretion protein LcnD-like (473 aa).

The Cytoplasmic segment spans residues 1-21 (MFDKKLLESSELYDKRYRNFS). The helical transmembrane segment at 22-44 (TLIILPLFILLVGGVIFTFFAHK) threads the bilayer. Residues 45–473 (ELTVISTGSI…FLDKIMGRTS (429 aa)) lie on the Extracellular side of the membrane.

Belongs to the membrane fusion protein (MFP) (TC 8.A.1) family.

The protein localises to the cell membrane. Functionally, involved in the secretion of a lactococcin. The sequence is that of Lactococcin A secretion protein LcnD-like (lcnD) from Lactococcus lactis subsp. lactis (strain IL1403) (Streptococcus lactis).